The following is a 193-amino-acid chain: Large ribosomal subunit protein eL19A (193 aa).

The interval 156-179 (QEQQDARRARAKAARQRRAKAVEE) is disordered. Residues 164–174 (ARAKAARQRRA) show a composition bias toward basic residues.

Belongs to the eukaryotic ribosomal protein eL19 family. In terms of assembly, component of the large ribosomal subunit (LSU). Mature yeast ribosomes consist of a small (40S) and a large (60S) subunit. The 40S small subunit contains 1 molecule of ribosomal RNA (18S rRNA) and at least 33 different proteins. The large 60S subunit contains 3 rRNA molecules (25S, 5.8S and 5S rRNA) and at least 46 different proteins. eL19 lies in close proximity to the binding site for eukaryotic initiation factor eIF4G.

Its subcellular location is the cytoplasm. Functionally, component of the ribosome, a large ribonucleoprotein complex responsible for the synthesis of proteins in the cell. The small ribosomal subunit (SSU) binds messenger RNAs (mRNAs) and translates the encoded message by selecting cognate aminoacyl-transfer RNA (tRNA) molecules. The large subunit (LSU) contains the ribosomal catalytic site termed the peptidyl transferase center (PTC), which catalyzes the formation of peptide bonds, thereby polymerizing the amino acids delivered by tRNAs into a polypeptide chain. The nascent polypeptides leave the ribosome through a tunnel in the LSU and interact with protein factors that function in enzymatic processing, targeting, and the membrane insertion of nascent chains at the exit of the ribosomal tunnel. eL19 may play a role in the last stages of translation initiation, in particular subunit joining and shedding/releasing factors. The sequence is that of Large ribosomal subunit protein eL19A (rpl1901) from Schizosaccharomyces pombe (strain 972 / ATCC 24843) (Fission yeast).